Reading from the N-terminus, the 315-residue chain is Ribosomal RNA small subunit methyltransferase H (315 aa).

S-adenosyl-L-methionine-binding positions include 36–38 (GGH), Asp56, Phe81, Asp103, and Gln110.

Belongs to the methyltransferase superfamily. RsmH family.

Its subcellular location is the cytoplasm. It carries out the reaction cytidine(1402) in 16S rRNA + S-adenosyl-L-methionine = N(4)-methylcytidine(1402) in 16S rRNA + S-adenosyl-L-homocysteine + H(+). Its function is as follows. Specifically methylates the N4 position of cytidine in position 1402 (C1402) of 16S rRNA. This chain is Ribosomal RNA small subunit methyltransferase H, found in Idiomarina loihiensis (strain ATCC BAA-735 / DSM 15497 / L2-TR).